The sequence spans 675 residues: DNA ligase (675 aa).

Residues 35–39 (DAVYD), 84–85 (SL), and Glu-118 each bind NAD(+). Lys-120 serves as the catalytic N6-AMP-lysine intermediate. 4 residues coordinate NAD(+): Arg-141, Glu-178, Lys-295, and Lys-319. Residues Cys-413, Cys-416, Cys-431, and Cys-436 each contribute to the Zn(2+) site. Positions 598–675 (GAIGALTGQT…DEAELKALLS (78 aa)) constitute a BRCT domain.

Belongs to the NAD-dependent DNA ligase family. LigA subfamily. Requires Mg(2+) as cofactor. Mn(2+) serves as cofactor.

The catalysed reaction is NAD(+) + (deoxyribonucleotide)n-3'-hydroxyl + 5'-phospho-(deoxyribonucleotide)m = (deoxyribonucleotide)n+m + AMP + beta-nicotinamide D-nucleotide.. Its function is as follows. DNA ligase that catalyzes the formation of phosphodiester linkages between 5'-phosphoryl and 3'-hydroxyl groups in double-stranded DNA using NAD as a coenzyme and as the energy source for the reaction. It is essential for DNA replication and repair of damaged DNA. The polypeptide is DNA ligase (Synechococcus sp. (strain RCC307)).